A 315-amino-acid chain; its full sequence is Phage tubulin-like protein (315 aa).

GTP is bound by residues 12–13 (GT), 93–95 (GSG), and Asn-165.

It belongs to the FtsZ family. PhuZ subfamily. As to quaternary structure, homomultimer. Polymerizes in a strictly GTP-dependent manner.

It localises to the host cytoplasm. The enzyme catalyses GTP + H2O = GDP + phosphate + H(+). Its activity is regulated as follows. The non-hydrolyzable GTP analog GMPCPP stabilizes filaments, which never disassemble. A tubulin-like GTPase that forms filaments, which are required for positioning viral DNA and capsids in the middle of the host cell for optimal replication. The motor component of a partition system which pushes phage DNA (encased by protein gp105) to the center of the bacterial host cell. Also required for movement of phage capsids to the vicinity of the viral DNA and rotation of the encased viral DNA at midcell. Forms filaments during the lytic phase, which position phage DNA at the center of the bacterial host cell. Filaments have a three-stranded intertwined achitecture and form a spindle-like cytoskeleton within the infected cell. Has GTPase activity. Filaments grow at the plus end and depolymerize at the minus end, a process called treadmilling, and switch from growing in a polar manner to catastrophic depolymerization, i.e. they display dynamic instability, like tubulin. In infected host cells the filament ends close to the cell pole are relatively stable, while the other end near the phage DNA is highly dynamic. Both capsid movement and DNA rotation probably require treadmilling. The protein is Phage tubulin-like protein of Pseudomonas phage 201phi2-1 (Pseudomonas chlororaphis phage 201phi2-1).